The sequence spans 777 residues: Histone-lysine N-methyltransferase set9 (777 aa).

Residues 117-231 (CPFEVNATNR…VGEEITVTYS (115 aa)) enclose the SET domain. 2 disordered regions span residues 263–414 (AVQK…ILSP) and 682–718 (RMGS…QGQY). Over residues 291–301 (TALQASRTPSV) the composition is skewed to polar residues. The span at 323-337 (TSTTDSAAQGAGADG) shows a compositional bias: low complexity. Polar residues-rich tracts occupy residues 371–405 (TAPS…QGSE) and 688–698 (KQGSSAPSTKG).

This sequence belongs to the class V-like SAM-binding methyltransferase superfamily. Histone-lysine methyltransferase family. Suvar4-20 subfamily.

The protein localises to the nucleus. It is found in the chromosome. The enzyme catalyses L-lysyl(20)-[histone H4] + 3 S-adenosyl-L-methionine = N(6),N(6),N(6)-trimethyl-L-lysyl(20)-[histone H4] + 3 S-adenosyl-L-homocysteine + 3 H(+). Functionally, histone methyltransferase that trimethylates 'Lys-20' of histone H4 to form H4K20me3. In Neurospora crassa (strain ATCC 24698 / 74-OR23-1A / CBS 708.71 / DSM 1257 / FGSC 987), this protein is Histone-lysine N-methyltransferase set9 (hlm-1).